An 801-amino-acid chain; its full sequence is tRNA(Met) cytidine acetyltransferase TmcA (801 aa).

Residues Gln-228, Gly-256 to Leu-265, and Arg-412 contribute to the ATP site. The 181-residue stretch at Glu-457–Ser-637 folds into the N-acetyltransferase domain. Acetyl-CoA contacts are provided by residues Ile-562–Thr-564, Met-569–Ser-575, and Glu-602.

This sequence belongs to the RNA cytidine acetyltransferase family. TmcA subfamily.

It localises to the cytoplasm. It carries out the reaction cytidine(34) in elongator tRNA(Met) + acetyl-CoA + ATP + H2O = N(4)-acetylcytidine(34) in elongator tRNA(Met) + ADP + phosphate + CoA + H(+). Catalyzes the formation of N(4)-acetylcytidine (ac(4)C) at the wobble position of tRNA(Met), by using acetyl-CoA as an acetyl donor and ATP (or GTP). The protein is tRNA(Met) cytidine acetyltransferase TmcA of Thermofilum pendens (strain DSM 2475 / Hrk 5).